The chain runs to 429 residues: Serine--tRNA ligase (429 aa).

234–236 (TSE) contributes to the L-serine binding site. Residues 265–267 (RKE) and Val281 contribute to the ATP site. Residue Glu288 participates in L-serine binding. Position 352–355 (352–355 (ELVS)) interacts with ATP. Residue Thr389 coordinates L-serine.

The protein belongs to the class-II aminoacyl-tRNA synthetase family. Type-1 seryl-tRNA synthetase subfamily. As to quaternary structure, homodimer. The tRNA molecule probably binds across the dimer.

It carries out the reaction tRNA(Ser) + L-serine + ATP = L-seryl-tRNA(Ser) + AMP + diphosphate + H(+). The catalysed reaction is tRNA(Sec) + L-serine + ATP = L-seryl-tRNA(Sec) + AMP + diphosphate + H(+). It participates in aminoacyl-tRNA biosynthesis; selenocysteinyl-tRNA(Sec) biosynthesis; L-seryl-tRNA(Sec) from L-serine and tRNA(Sec): step 1/1. Functionally, catalyzes the attachment of serine to tRNA(Ser). Is also probably able to aminoacylate tRNA(Sec) with serine, to form the misacylated tRNA L-seryl-tRNA(Sec), which will be further converted into selenocysteinyl-tRNA(Sec). The chain is Serine--tRNA ligase from Encephalitozoon cuniculi (strain GB-M1) (Microsporidian parasite).